Consider the following 483-residue polypeptide: General transcription factor IIH subunit 4 (483 aa).

Positions Pro-93 to Thr-117 are disordered. Residues Gln-94–Gln-116 show a composition bias toward low complexity.

The protein belongs to the TFB2 family. Component of the 7-subunit TFIIH core complex composed of XPB/repB, XPD/repD, gtf2h1, gtf2h2, gtf2h3, gtf2h4 and gtf2h5, which is active in NER. The core complex associates with the 3-subunit CDK-activating kinase (CAK) module composed of cycH/cyclin H, cdk7 and mnat1 to form the 10-subunit holoenzyme (holo-TFIIH) active in transcription.

It is found in the nucleus. In terms of biological role, component of the general transcription and DNA repair factor IIH (TFIIH) core complex, which is involved in general and transcription-coupled nucleotide excision repair (NER) of damaged DNA and, when complexed to CAK, in RNA transcription by RNA polymerase II. In NER, TFIIH acts by opening DNA around the lesion to allow the excision of the damaged oligonucleotide and its replacement by a new DNA fragment. In transcription, TFIIH has an essential role in transcription initiation. When the pre-initiation complex (PIC) has been established, TFIIH is required for promoter opening and promoter escape. Phosphorylation of the C-terminal tail (CTD) of the largest subunit of RNA polymerase II by the kinase module CAK controls the initiation of transcription. In Dictyostelium discoideum (Social amoeba), this protein is General transcription factor IIH subunit 4 (gtf2h4).